A 485-amino-acid polypeptide reads, in one-letter code: NADH-quinone oxidoreductase subunit N (485 aa).

Helical transmembrane passes span 8–28 (LIAL…MLSI), 35–55 (FLNA…LWFV), 75–95 (LYTG…YPWL), 105–125 (FYLL…ANHL), 127–147 (SLFL…GYAF), 159–179 (YTIL…LVYA), 203–223 (LLAG…LVPF), 235–255 (PAPV…GVVM), 271–291 (VVLG…ALTQ), 297–317 (LLGY…IALK), 326–346 (VGVY…VVSL), 374–394 (AVMT…GFIG), 408–427 (WWLT…YYLR), and 455–475 (VVVL…QPLI).

It belongs to the complex I subunit 2 family. In terms of assembly, NDH-1 is composed of 13 different subunits. Subunits NuoA, H, J, K, L, M, N constitute the membrane sector of the complex.

The protein resides in the cell inner membrane. The enzyme catalyses a quinone + NADH + 5 H(+)(in) = a quinol + NAD(+) + 4 H(+)(out). Functionally, NDH-1 shuttles electrons from NADH, via FMN and iron-sulfur (Fe-S) centers, to quinones in the respiratory chain. The immediate electron acceptor for the enzyme in this species is believed to be ubiquinone. Couples the redox reaction to proton translocation (for every two electrons transferred, four hydrogen ions are translocated across the cytoplasmic membrane), and thus conserves the redox energy in a proton gradient. In Cronobacter sakazakii (strain ATCC BAA-894) (Enterobacter sakazakii), this protein is NADH-quinone oxidoreductase subunit N.